The primary structure comprises 211 residues: Ribosomal RNA small subunit methyltransferase G (211 aa).

S-adenosyl-L-methionine-binding positions include glycine 73, 126-127 (IE), and arginine 142.

It belongs to the methyltransferase superfamily. RNA methyltransferase RsmG family.

It is found in the cytoplasm. It carries out the reaction guanosine(527) in 16S rRNA + S-adenosyl-L-methionine = N(7)-methylguanosine(527) in 16S rRNA + S-adenosyl-L-homocysteine. In terms of biological role, specifically methylates the N7 position of guanine in position 527 of 16S rRNA. The chain is Ribosomal RNA small subunit methyltransferase G from Methylorubrum extorquens (strain CM4 / NCIMB 13688) (Methylobacterium extorquens).